The primary structure comprises 771 residues: Protein lin-54 homolog (771 aa).

2 disordered regions span residues 21–44 and 68–105; these read AMDE…SAQV and TNAK…IPSL. Low complexity predominate over residues 72–92; it reads STTSSTTQLLLTPSSSSSTTT. 3 positions are modified to phosphoserine: Ser-288, Ser-292, and Ser-308. Residues 544–657 enclose the CRC domain; it reads PRKPCNCTRS…KCMGCKNFEE (114 aa). The interval 546–559 is DNA-binding; it reads KPCNCTRSQCLKLY. The Zn(2+) site is built by Cys-548, Cys-550, Cys-555, Cys-560, Cys-562, Cys-569, Cys-572, Cys-574, and Cys-577. Positions 606 to 619 are linker; sequence IGKGKEGESDRRHS. Zn(2+) contacts are provided by Cys-622, Cys-624, Cys-629, Cys-634, Cys-636, Cys-643, Cys-647, Cys-649, and Cys-652. Residues 622 to 635 form a DNA-binding region; sequence CNCKKSGCLKNYCE.

The protein belongs to the lin-54 family. As to quaternary structure, component of the DREAM complex.

It is found in the nucleus. In terms of biological role, component of the DREAM complex, a multiprotein complex that can both act as a transcription activator or repressor depending on the context. Specifically recognizes the consensus motif 5'-TTYRAA-3' in target DNA. The polypeptide is Protein lin-54 homolog (lin54) (Danio rerio (Zebrafish)).